Consider the following 251-residue polypeptide: Hydroxyacylglutathione hydrolase (251 aa).

The Zn(2+) site is built by H53, H55, D57, H58, H110, D127, and H165.

The protein belongs to the metallo-beta-lactamase superfamily. Glyoxalase II family. Monomer. Zn(2+) is required as a cofactor.

It catalyses the reaction an S-(2-hydroxyacyl)glutathione + H2O = a 2-hydroxy carboxylate + glutathione + H(+). Its pathway is secondary metabolite metabolism; methylglyoxal degradation; (R)-lactate from methylglyoxal: step 2/2. Thiolesterase that catalyzes the hydrolysis of S-D-lactoyl-glutathione to form glutathione and D-lactic acid. The polypeptide is Hydroxyacylglutathione hydrolase (Yersinia pestis).